Here is a 253-residue protein sequence, read N- to C-terminus: Tryptophan synthase alpha chain (253 aa).

Residues Glu-47 and Asp-58 each act as proton acceptor in the active site.

This sequence belongs to the TrpA family. In terms of assembly, tetramer of two alpha and two beta chains.

The catalysed reaction is (1S,2R)-1-C-(indol-3-yl)glycerol 3-phosphate + L-serine = D-glyceraldehyde 3-phosphate + L-tryptophan + H2O. It functions in the pathway amino-acid biosynthesis; L-tryptophan biosynthesis; L-tryptophan from chorismate: step 5/5. Its function is as follows. The alpha subunit is responsible for the aldol cleavage of indoleglycerol phosphate to indole and glyceraldehyde 3-phosphate. This is Tryptophan synthase alpha chain from Syntrophotalea carbinolica (strain DSM 2380 / NBRC 103641 / GraBd1) (Pelobacter carbinolicus).